Here is a 342-residue protein sequence, read N- to C-terminus: Nicotinate-nucleotide--dimethylbenzimidazole phosphoribosyltransferase (342 aa).

Glutamate 311 serves as the catalytic Proton acceptor.

It belongs to the CobT family.

It carries out the reaction 5,6-dimethylbenzimidazole + nicotinate beta-D-ribonucleotide = alpha-ribazole 5'-phosphate + nicotinate + H(+). It functions in the pathway nucleoside biosynthesis; alpha-ribazole biosynthesis; alpha-ribazole from 5,6-dimethylbenzimidazole: step 1/2. Catalyzes the synthesis of alpha-ribazole-5'-phosphate from nicotinate mononucleotide (NAMN) and 5,6-dimethylbenzimidazole (DMB). This is Nicotinate-nucleotide--dimethylbenzimidazole phosphoribosyltransferase from Photobacterium profundum (strain SS9).